Reading from the N-terminus, the 331-residue chain is tRNA N6-adenosine threonylcarbamoyltransferase (331 aa).

Fe cation contacts are provided by His-109, His-113, and Tyr-130. Residues 130-134, Asp-162, Asp-183, and Ser-262 contribute to the substrate site; that span reads YLSGG. Residue Asp-290 coordinates Fe cation.

This sequence belongs to the KAE1 / TsaD family. The cofactor is Fe(2+).

It is found in the cytoplasm. It catalyses the reaction L-threonylcarbamoyladenylate + adenosine(37) in tRNA = N(6)-L-threonylcarbamoyladenosine(37) in tRNA + AMP + H(+). Its function is as follows. Required for the formation of a threonylcarbamoyl group on adenosine at position 37 (t(6)A37) in tRNAs that read codons beginning with adenine. Is probably involved in the transfer of the threonylcarbamoyl moiety of threonylcarbamoyl-AMP (TC-AMP) to the N6 group of A37. The polypeptide is tRNA N6-adenosine threonylcarbamoyltransferase (Saccharolobus islandicus (strain M.16.27) (Sulfolobus islandicus)).